A 477-amino-acid chain; its full sequence is Argininosuccinate lyase (477 aa).

The protein belongs to the lyase 1 family. Argininosuccinate lyase subfamily.

Its subcellular location is the cytoplasm. The catalysed reaction is 2-(N(omega)-L-arginino)succinate = fumarate + L-arginine. It functions in the pathway amino-acid biosynthesis; L-arginine biosynthesis; L-arginine from L-ornithine and carbamoyl phosphate: step 3/3. The protein is Argininosuccinate lyase of Streptomyces avermitilis (strain ATCC 31267 / DSM 46492 / JCM 5070 / NBRC 14893 / NCIMB 12804 / NRRL 8165 / MA-4680).